The sequence spans 771 residues: Hyperosmolality-gated Ca2+ permeable channel 1.3 (771 aa).

Residues 7 to 27 (IGVAAAINILTAIIFLLAFAI) traverse the membrane as a helical segment. The residue at position 54 (S54) is a Phosphoserine. 9 helical membrane passes run 101-121 (IYLI…SILV), 158-178 (FWTH…VLMK), 375-395 (LIMH…IAFV), 427-447 (FLPG…LMVM), 467-487 (YYIF…SAFE), 512-532 (ATFF…GEIL), 584-604 (PVTP…YLVF), 630-650 (IISA…TKGA), and 651-671 (AQST…HRYC). Positions 744–771 (VPTKRQSRINTPAVSHASRGSSRSPPSK) are disordered. A compositionally biased stretch (polar residues) spans 751 to 771 (RINTPAVSHASRGSSRSPPSK).

This sequence belongs to the CSC1 (TC 1.A.17) family. Phosphorylated at Ser-54 by BIK1 in response to pathogen-associated molecular pattern (PAMP) perception, promoting its activation. As to expression, preferentially expressed in guard cells.

The protein localises to the cell membrane. It carries out the reaction Ca(2+)(in) = Ca(2+)(out). Activated following phosphorylation at Ser-54 by BIK1. In terms of biological role, calcium-permeable channel that plays a key role in plant stomatal immunity. In response to pathogen-associated molecular pattern (PAMP) perception, phosphorylated and activated by BIK1, triggering rapid influx of calcium ions across the plasma membrane, leading to stomatal closure. The sequence is that of Hyperosmolality-gated Ca2+ permeable channel 1.3 from Arabidopsis thaliana (Mouse-ear cress).